The sequence spans 406 residues: Arginine deiminase (406 aa).

Cysteine 396 serves as the catalytic Amidino-cysteine intermediate.

The protein belongs to the arginine deiminase family.

It localises to the cytoplasm. The catalysed reaction is L-arginine + H2O = L-citrulline + NH4(+). It participates in amino-acid degradation; L-arginine degradation via ADI pathway; carbamoyl phosphate from L-arginine: step 1/2. This is Arginine deiminase from Salmonella typhimurium (strain LT2 / SGSC1412 / ATCC 700720).